The following is a 347-amino-acid chain: N-acetyl-gamma-glutamyl-phosphate reductase (347 aa).

Residue C151 is part of the active site.

This sequence belongs to the NAGSA dehydrogenase family. Type 1 subfamily.

It localises to the cytoplasm. The catalysed reaction is N-acetyl-L-glutamate 5-semialdehyde + phosphate + NADP(+) = N-acetyl-L-glutamyl 5-phosphate + NADPH + H(+). The protein operates within amino-acid biosynthesis; L-arginine biosynthesis; N(2)-acetyl-L-ornithine from L-glutamate: step 3/4. In terms of biological role, catalyzes the NADPH-dependent reduction of N-acetyl-5-glutamyl phosphate to yield N-acetyl-L-glutamate 5-semialdehyde. In Corynebacterium glutamicum (strain R), this protein is N-acetyl-gamma-glutamyl-phosphate reductase.